The chain runs to 341 residues: 4-amino-5-hydroxymethyl-2-methylpyrimidine phosphate synthase (341 aa).

Residue K62 is modified to N6-(pyridoxal phosphate)lysine. H66 is an active-site residue. 115 to 118 contributes to the pyridoxal 5'-phosphate binding site; it reads GEFG. The CCCFC; essential for catalytic activity, may be the site of iron coordination motif lies at 195 to 199; the sequence is CCCFC.

The protein belongs to the NMT1/THI5 family. In terms of assembly, homodimer. Requires Fe cation as cofactor.

The enzyme catalyses N(6)-(pyridoxal phosphate)-L-lysyl-[4-amino-5-hydroxymethyl-2-methylpyrimidine phosphate synthase] + L-histidyl-[4-amino-5-hydroxymethyl-2-methylpyrimidine phosphate synthase] + 2 Fe(3+) + 4 H2O = L-lysyl-[4-amino-5-hydroxymethyl-2-methylpyrimidine phosphate synthase] + (2S)-2-amino-5-hydroxy-4-oxopentanoyl-[4-amino-5-hydroxymethyl-2-methylpyrimidine phosphate synthase] + 4-amino-2-methyl-5-(phosphooxymethyl)pyrimidine + 3-oxopropanoate + 2 Fe(2+) + 2 H(+). It functions in the pathway cofactor biosynthesis; thiamine diphosphate biosynthesis. In terms of biological role, responsible for the formation of the pyrimidine heterocycle in the thiamine biosynthesis pathway. Catalyzes the formation of hydroxymethylpyrimidine phosphate (HMP-P) from histidine and pyridoxal phosphate (PLP). The protein uses PLP and the active site histidine to form HMP-P, generating an inactive enzyme. The enzyme can only undergo a single turnover, which suggests it is a suicide enzyme. This is 4-amino-5-hydroxymethyl-2-methylpyrimidine phosphate synthase from Uromyces fabae (Rust fungus).